A 328-amino-acid polypeptide reads, in one-letter code: Nickel import system permease protein NikB (328 aa).

6 consecutive transmembrane segments (helical) span residues 11-31, 104-124, 139-159, 170-190, 229-249, and 279-299; these read LIQM…LMKL, LLIS…LGII, VIST…LLFI, ILSQ…AYII, ILPI…GTVV, and VLFI…LTLL. The region spanning 100–297 is the ABC transmembrane type-1 domain; sequence APITLLISFS…IINTIADLLT (198 aa).

Belongs to the binding-protein-dependent transport system permease family. OppBC subfamily. In terms of assembly, the complex is composed of two ATP-binding proteins (NikD and NikE), two transmembrane proteins (NikB and NikC) and a solute-binding protein (NikA).

Its subcellular location is the cell membrane. Functionally, part of the ABC transporter complex NikABCDE (Opp2) involved in nickel import. Probably responsible for the translocation of the substrate across the membrane. In Staphylococcus aureus (strain MRSA252), this protein is Nickel import system permease protein NikB.